We begin with the raw amino-acid sequence, 223 residues long: Retbindin (223 aa).

An N-terminal signal peptide occupies residues 1–30 (MANRGHTQPRALAWALGLTLVWILLGACGG). Intrachain disulfides connect cysteine 73–cysteine 143, cysteine 80–cysteine 120, cysteine 113–cysteine 157, and cysteine 126–cysteine 139.

It belongs to the folate receptor family. Post-translationally, not N-glycosylated.

It localises to the secreted. Its subcellular location is the extracellular space. The protein resides in the extracellular matrix. The protein localises to the interphotoreceptor matrix. It is found in the cell membrane. Riboflavin-binding protein which might have a role in retinal flavin transport. The chain is Retbindin (RTBDN) from Canis lupus familiaris (Dog).